Here is a 159-residue protein sequence, read N- to C-terminus: Phosphopantetheine adenylyltransferase (159 aa).

Ser9 is a binding site for substrate. ATP-binding positions include 9–10 (SF) and His17. Substrate-binding residues include Lys41, Ile73, and Lys87. Residues 88-90 (GLR), Glu98, and 122-128 (WGYVSSS) contribute to the ATP site.

Belongs to the bacterial CoaD family. In terms of assembly, homohexamer. Mg(2+) serves as cofactor.

It localises to the cytoplasm. It catalyses the reaction (R)-4'-phosphopantetheine + ATP + H(+) = 3'-dephospho-CoA + diphosphate. The protein operates within cofactor biosynthesis; coenzyme A biosynthesis; CoA from (R)-pantothenate: step 4/5. Functionally, reversibly transfers an adenylyl group from ATP to 4'-phosphopantetheine, yielding dephospho-CoA (dPCoA) and pyrophosphate. This Nocardioides sp. (strain ATCC BAA-499 / JS614) protein is Phosphopantetheine adenylyltransferase.